A 1645-amino-acid chain; its full sequence is Thrombospondin type-1 domain-containing protein 7A (1645 aa).

The N-terminal stretch at 1–38 (MGLRAGRLASPSRGVLQLLRLPLLLLLLLSSGARGAAA) is a signal peptide. At 39-1595 (QGDTEVPTLY…FGPDGRLKTW (1557 aa)) the chain is on the extracellular side. TSP type-1 domains follow at residues 46-105 (TLYL…KVCD), 109-181 (ELYD…IPCQ), and 183-236 (DCIV…NPCE). N-linked (GlcNAc...) asparagine glycosylation occurs at Asn223. Residues 255 to 300 (PHTRQARQARRRGKNKEREKERGKAVKDPEARELIKKKRNRNRQNR) form a disordered region. Positions 256–304 (HTRQARQARRRGKNKEREKERGKAVKDPEARELIKKKRNRNRQNRQENR) form a coiled coil. Residues 258–269 (RQARQARRRGKN) show a composition bias toward basic residues. Residues 270-288 (KEREKERGKAVKDPEAREL) show a composition bias toward basic and acidic residues. Residues 289-298 (IKKKRNRNRQ) show a composition bias toward basic residues. A glycan (N-linked (GlcNAc...) asparagine) is linked at Asn321. TSP type-1 domains follow at residues 349-405 (ECQV…VSQG), 412-499 (ATYG…VPCP), 501-563 (ECEV…PSCY), 623-684 (DCVL…HPCT), 685-758 (VYHW…LPCR), 760-820 (DCVV…PTCH), 821-893 (SYRW…IPCQ), 895-948 (DCQF…CPCD), 949-1022 (KYNA…IPCP), 1024-1084 (DCKL…SDCN), 1085-1152 (QYIW…LPCP), 1154-1208 (DCVI…KNCY), 1209-1272 (HYDY…VECP), 1274-1329 (NCQL…KPCY), 1330-1400 (RWQY…QPCP), and 1402-1463 (DCYL…GQCY). 3 disulfides stabilise this stretch: Cys424–Cys494, Cys444–Cys498, and Cys455–Cys483. The N-linked (GlcNAc...) asparagine glycan is linked to Asn439. N-linked (GlcNAc...) asparagine glycosylation is present at Asn489. 2 cysteine pairs are disulfide-bonded: Cys624/Cys666 and Cys635/Cys639. Asn668 is a glycosylation site (N-linked (GlcNAc...) asparagine). Cystine bridges form between Cys678–Cys683, Cys696–Cys753, Cys717–Cys757, Cys728–Cys741, Cys761–Cys803, Cys772–Cys776, and Cys813–Cys819. N-linked (GlcNAc...) asparagine glycosylation occurs at Asn706. Asn957 carries an N-linked (GlcNAc...) asparagine glycan. Cystine bridges form between Cys961/Cys1017, Cys983/Cys1021, Cys994/Cys1007, Cys1025/Cys1062, Cys1036/Cys1040, and Cys1079/Cys1083. A glycan (N-linked (GlcNAc...) asparagine) is linked at Asn1032. Cys1201 and Cys1207 are oxidised to a cystine. N-linked (GlcNAc...) asparagine glycosylation occurs at Asn1213. Cystine bridges form between Cys1220–Cys1267, Cys1228–Cys1271, Cys1239–Cys1252, Cys1275–Cys1313, Cys1286–Cys1290, Cys1323–Cys1328, Cys1339–Cys1395, Cys1346–Cys1399, Cys1357–Cys1376, Cys1403–Cys1447, Cys1414–Cys1418, and Cys1457–Cys1462. Asn1264 is a glycosylation site (N-linked (GlcNAc...) asparagine). N-linked (GlcNAc...) asparagine glycosylation occurs at Asn1354. N-linked (GlcNAc...) asparagine glycans are attached at residues Asn1488 and Asn1535. A helical membrane pass occupies residues 1596-1616 (VYGVAAGAFVLLVFIVSMIYL). The Cytoplasmic segment spans residues 1617 to 1645 (ACKKPKKPQRRQNNRLKPLTLAYDGDADM).

In terms of processing, proteolytic cleavage in the extracellular region generates a 210 kDa soluble form. Extensively N-glycosylated. Detected on kidney podocytes along the glomerular capillary wall (at protein level).

Its subcellular location is the cell membrane. The protein resides in the cell projection. The protein localises to the secreted. Plays a role in actin cytoskeleton rearrangement. Functionally, the soluble form promotes endothelial cell migration and filopodia formation during sprouting angiogenesis via a FAK-dependent mechanism. This is Thrombospondin type-1 domain-containing protein 7A (Thsd7a) from Mus musculus (Mouse).